The chain runs to 451 residues: MRECISIHVGQAGAQMGNACWELYCLEHGIQPDGQMPSDKTIGGGDDSFNTFFCETGAGKHVPRAVFVDLEPTVIDEIRTGVYRQLFHPEQLITGKEDAANNYARGHYTIGKEIVDIVLDRIRKLADNCAGLQGFLIFHSFGGGTGSGFTSLLMERLSVDYGKKSKLEFAIYPAPQVATAVVEPYNSILTTHTTLEHSDCAFMVDNEAIYDICRRNLDIERPTYTNLNRLIGQIVSSITASLRFDGALNVDLTEFQTNLVPYPRIHFPLVTYAPVISAEKAYHEQLSVSEITNACFEPANQMVKCDPRHGKYMACCLLYRGDVVPKDVNAAIATIKTKRSIQFVDWCPTGFKVGINYQPPTAVPGGDLAKVSRAVCMLSNTTAIAEAWARLDHKFDLMYAKRAFVHWYVGEGMEEGEFTEAREDLAALEKDYEEVGVDSADAEGEEEGEEY.

Glutamine 11 provides a ligand contact to GTP. Lysine 40 bears the N6-acetyllysine mark. GTP-binding residues include glutamate 71, serine 140, glycine 144, threonine 145, threonine 179, asparagine 206, and asparagine 228. Glutamate 71 contributes to the Mg(2+) binding site. Glutamate 254 is an active-site residue.

This sequence belongs to the tubulin family. As to quaternary structure, dimer of alpha and beta chains. A typical microtubule is a hollow water-filled tube with an outer diameter of 25 nm and an inner diameter of 15 nM. Alpha-beta heterodimers associate head-to-tail to form protofilaments running lengthwise along the microtubule wall with the beta-tubulin subunit facing the microtubule plus end conferring a structural polarity. Microtubules usually have 13 protofilaments but different protofilament numbers can be found in some organisms and specialized cells. It depends on Mg(2+) as a cofactor. Undergoes a tyrosination/detyrosination cycle, the cyclic removal and re-addition of a C-terminal tyrosine residue by the enzymes tubulin tyrosine carboxypeptidase (TTCP) and tubulin tyrosine ligase (TTL), respectively. In terms of processing, acetylation of alpha chains at Lys-40 stabilizes microtubules and affects affinity and processivity of microtubule motors. This modification has a role in multiple cellular functions, ranging from cell motility, cell cycle progression or cell differentiation to intracellular trafficking and signaling.

The protein resides in the cytoplasm. It localises to the cytoskeleton. It carries out the reaction GTP + H2O = GDP + phosphate + H(+). Its function is as follows. Tubulin is the major constituent of microtubules, a cylinder consisting of laterally associated linear protofilaments composed of alpha- and beta-tubulin heterodimers. Microtubules grow by the addition of GTP-tubulin dimers to the microtubule end, where a stabilizing cap forms. Below the cap, tubulin dimers are in GDP-bound state, owing to GTPase activity of alpha-tubulin. This chain is Tubulin alpha-3 chain, found in Homarus americanus (American lobster).